A 138-amino-acid polypeptide reads, in one-letter code: Basic phospholipase A2 Drk-b1 (138 aa).

Positions 1–16 (MRTLWIVAMCLIGVEG) are cleaved as a signal peptide. Cystine bridges form between C42–C131, C44–C60, C59–C111, C65–C138, C66–C104, C73–C97, and C91–C102. 3 residues coordinate Ca(2+): Y43, G45, and G47. H63 is an active-site residue. Residue D64 participates in Ca(2+) binding. D105 is a catalytic residue.

Requires Ca(2+) as cofactor. In terms of tissue distribution, expressed by the venom gland.

The protein localises to the secreted. The catalysed reaction is a 1,2-diacyl-sn-glycero-3-phosphocholine + H2O = a 1-acyl-sn-glycero-3-phosphocholine + a fatty acid + H(+). Exhibits high hydrolytic activities and shows strong preference for the anionic micelles (dPPC with deoxycholate) to the zwitterionic micelles (dPPC with Triton X-100). PLA2 catalyzes the calcium-dependent hydrolysis of the 2-acyl groups in 3-sn-phosphoglycerides. The polypeptide is Basic phospholipase A2 Drk-b1 (Daboia russelii (Russel's viper)).